A 224-amino-acid chain; its full sequence is UPF0758 protein Rpic_2712 (224 aa).

The 123-residue stretch at 102 to 224 (TFESAQSVKD…VYGFLEHGKM (123 aa)) folds into the MPN domain. Residues His173, His175, and Asp186 each coordinate Zn(2+). A JAMM motif motif is present at residues 173–186 (HNHPTGNTEPSESD).

The protein belongs to the UPF0758 family.

The sequence is that of UPF0758 protein Rpic_2712 from Ralstonia pickettii (strain 12J).